The sequence spans 583 residues: MEPDLHDQQQQQRVHSVVIITLPPSDDPSQGKTISAFTLTDHDYPLEIPPEDNPNPSFQPDPLHRNQQSRLLFSDLSMNSPRLVLGLLGISLLAVAFYASVFPNSVQMFRVSPDERNRDDDDNLRETASFVFPVYHKLRAREFHERILEEDLGLENENFVESMDLELVNPVKVNDVLSTSAGSIDSSTTIFPVGGNVYPDGLYYTRILVGKPEDGQYYHLDIDTGSELTWIQCDAPCTSCAKGANQLYKPRKDNLVRSSEAFCVEVQRNQLTEHCENCHQCDYEIEYADHSYSMGVLTKDKFHLKLHNGSLAESDIVFGCGYDQQGLLLNTLLKTDGILGLSRAKISLPSQLASRGIISNVVGHCLASDLNGEGYIFMGSDLVPSHGMTWVPMLHDSRLDAYQMQVTKMSYGQGMLSLDGENGRVGKVLFDTGSSYTYFPNQAYSQLVTSLQEVSGLELTRDDSDETLPICWRAKTNFPFSSLSDVKKFFRPITLQIGSKWLIISRKLLIQPEDYLIISNKGNVCLGILDGSSVHDGSTIILGDISMRGHLIVYDNVKRRIGWMKSDCVRPREIDHNVPFFQG.

A helical membrane pass occupies residues 83 to 103 (LVLGLLGISLLAVAFYASVFP). The region spanning 203-564 (YYTRILVGKP…DNVKRRIGWM (362 aa)) is the Peptidase A1 domain. Catalysis depends on residues D223 and D431.

Belongs to the peptidase A1 family. Interacts with BAG6 and BAGP1.

It localises to the membrane. Functionally, involved in proteolytic processing of BAG6 and plant basal immunity. This is Aspartyl protease APCB1 from Arabidopsis thaliana (Mouse-ear cress).